We begin with the raw amino-acid sequence, 247 residues long: UPF0280 protein MmarC6_1437 (247 aa).

It belongs to the UPF0280 family.

This is UPF0280 protein MmarC6_1437 from Methanococcus maripaludis (strain C6 / ATCC BAA-1332).